A 523-amino-acid polypeptide reads, in one-letter code: Volkensin (523 aa).

Active-site residues include Tyr-74, Tyr-113, Glu-162, and Arg-165. An AMP-binding site is contributed by 111 to 113 (GGY). 2 disulfides stabilise this stretch: Cys-245-Cys-269 and Cys-285-Cys-304. A propeptide spans 251-265 (QSDSPLVIRSFVDRN) (linker peptide). The region spanning 270 to 397 (PSGETTAFIV…YAASQAWRVT (128 aa)) is the Ricin B-type lectin 1 domain. A carbohydrate contacts are provided by residues 287–291 (DVKVE), Gln-300, Lys-305, and Asn-311. Cys-328 and Cys-343 are oxidised to a cystine. A carbohydrate is bound by residues Asn-358 and Asn-398. Residues Asn-358 and Asn-398 are each glycosylated (N-linked (GlcNAc...) asparagine). The 124-residue stretch at 400-523 (TVPTVTTIVG…HGNSNQQWFL (124 aa)) folds into the Ricin B-type lectin 2 domain. 2 disulfides stabilise this stretch: Cys-414–Cys-427 and Cys-453–Cys-471.

In the N-terminal section; belongs to the ribosome-inactivating protein family. Type 2 RIP subfamily. As to quaternary structure, disulfide-linked dimer of A and B chains. In terms of processing, N-glycosylated. Contains mannose and galactose. In terms of tissue distribution, expressed in roots (at protein level). Expressed in seeds (at protein level).

It catalyses the reaction Endohydrolysis of the N-glycosidic bond at one specific adenosine on the 28S rRNA.. Its activity is regulated as follows. Hemagglutinating activity is inhibited by galactose and structurally related sugars. Functionally, has N-glycosidase activity and is responsible for inhibiting protein synthesis through the catalytic inactivation of 60S ribosomal subunits by removing a specific adenine of 28S rRNA. Inhibits GTP-dependent binding of EF2 (elongation factor 2) to ribosomes. Binds to cell receptors and probably facilitates the entry into the cell of the A chain. Also acts as a galactose-specific lectin responsible for cell agglutination. The protein is Volkensin of Adenia volkensii (Kilyambiti plant).